A 54-amino-acid chain; its full sequence is Chymosin (54 aa).

The propeptide at 1–27 (SEITRVPLHKGKSLRKALKEHGLLEBF) is activation peptide.

It belongs to the peptidase A1 family. In terms of assembly, monomer.

It catalyses the reaction Broad specificity similar to that of pepsin A. Clots milk by cleavage of a single 104-Ser-Phe-|-Met-Ala-107 bond in kappa-chain of casein.. Its function is as follows. Chymosin is synthesized in the mucosa of the stomach. The enzyme hydrolyzes casein to paracasein. The polypeptide is Chymosin (CYM) (Felis catus (Cat)).